Here is a 602-residue protein sequence, read N- to C-terminus: Probable translation initiation factor IF-2 (602 aa).

One can recognise a tr-type G domain in the interval 15–230 (LRTPIVAVLG…VLMGLSQRYL (216 aa)). The interval 24 to 31 (GHVDHGKT) is G1. GTP is bound at residue 24–31 (GHVDHGKT). The G2 stretch occupies residues 49–53 (AITQH). The interval 86–89 (DTPG) is G3. Residues 86-90 (DTPGH) and 140-143 (NKID) each bind GTP. Residues 140–143 (NKID) form a G4 region. Residues 208-210 (SAE) form a G5 region.

The protein belongs to the TRAFAC class translation factor GTPase superfamily. Classic translation factor GTPase family. IF-2 subfamily.

Functionally, function in general translation initiation by promoting the binding of the formylmethionine-tRNA to ribosomes. Seems to function along with eIF-2. This chain is Probable translation initiation factor IF-2, found in Natronomonas pharaonis (strain ATCC 35678 / DSM 2160 / CIP 103997 / JCM 8858 / NBRC 14720 / NCIMB 2260 / Gabara) (Halobacterium pharaonis).